The chain runs to 597 residues: MHKYRTHTCGELSLAHVGLQVKLSGWLYRRRDHGGLLFIDLRDHYGIIQLVFNDDCSAVQAEISKIKFETVITVEGAVVARSNETINKNISTGDVEVVVSSYVVESFAEELPLQINGEYEAPEETRLKYRFLDLRGARLHQNIVLRSKVIQELRNQMLSNGFIEFQTPILTASSPEGARDFLVPSRLHPGKFYALPQAPQQFKQLIMMSGFDKYFQIAPCFRDEDARADRSPGEFYQLDIEMAFVTQEDVFGLVEPVLYNTFKKFSNYSITNIPFPRITYDESMLRYGSDKPDLRNPIQISDVTDIFQCSEFTTLKDSINCGAVVRAIPAPMSANKPRSFFDKMIEYAKHLGASGLAYIQFTNDGVKGSIAKFFDEALLARIKKLVKCQDGDAIFFICDKENDATKVAAKIRAKVGEELNIIKTDCYKFCWVIDFPFYQLDSEINKITFSHNPFSMPQGGIEAFNKAKTVEDLLSIKAFQYDIVCNGVELSSGAIRNHKPDLMYKAFAIVGYSKDEVDKQFGAMIRAFCYGAPPHGGIAPGIDRILMLLTNSVNIREVIAFPMNQQAEDLLMGCPAAVTDKQLHELQLKLISKERIK.

Position 176 (Glu-176) interacts with L-aspartate. Residues 200-203 (QQFK) are aspartate. L-aspartate-binding residues include Arg-222 and His-451. 222 to 224 (RDE) contacts ATP. Residue Glu-489 participates in ATP binding. Arg-496 contributes to the L-aspartate binding site. Position 541–544 (541–544 (GIDR)) interacts with ATP.

Belongs to the class-II aminoacyl-tRNA synthetase family. Type 1 subfamily. In terms of assembly, homodimer.

The protein resides in the cytoplasm. The catalysed reaction is tRNA(Asx) + L-aspartate + ATP = L-aspartyl-tRNA(Asx) + AMP + diphosphate. Functionally, aspartyl-tRNA synthetase with relaxed tRNA specificity since it is able to aspartylate not only its cognate tRNA(Asp) but also tRNA(Asn). Reaction proceeds in two steps: L-aspartate is first activated by ATP to form Asp-AMP and then transferred to the acceptor end of tRNA(Asp/Asn). The chain is Aspartate--tRNA(Asp/Asn) ligase from Orientia tsutsugamushi (strain Boryong) (Rickettsia tsutsugamushi).